We begin with the raw amino-acid sequence, 215 residues long: Probable phosphoglycerate mutase GpmB (215 aa).

Substrate-binding positions include 8 to 15 (RHGETQWN), 21 to 22 (QG), arginine 58, lysine 60, 82 to 85 (ELDM), 104 to 105 (RR), and 151 to 152 (GI). The Tele-phosphohistidine intermediate role is filled by histidine 9. Residue glutamate 82 is the Proton donor/acceptor of the active site.

Belongs to the phosphoglycerate mutase family. GpmB subfamily.

The enzyme catalyses (2R)-2-phosphoglycerate = (2R)-3-phosphoglycerate. The protein operates within carbohydrate degradation; glycolysis; pyruvate from D-glyceraldehyde 3-phosphate: step 3/5. The chain is Probable phosphoglycerate mutase GpmB from Salmonella paratyphi A (strain AKU_12601).